The sequence spans 172 residues: 6,7-dimethyl-8-ribityllumazine synthase (172 aa).

5-amino-6-(D-ribitylamino)uracil contacts are provided by residues Phe-22 and Ala-56–Glu-58. Leu-78–Gly-79 contacts (2S)-2-hydroxy-3-oxobutyl phosphate. Ala-80–Ile-82 provides a ligand contact to 5-amino-6-(D-ribitylamino)uracil. The active-site Proton donor is the His-88. Phe-113 serves as a coordination point for 5-amino-6-(D-ribitylamino)uracil. Arg-127 contacts (2S)-2-hydroxy-3-oxobutyl phosphate.

The protein belongs to the DMRL synthase family.

It catalyses the reaction (2S)-2-hydroxy-3-oxobutyl phosphate + 5-amino-6-(D-ribitylamino)uracil = 6,7-dimethyl-8-(1-D-ribityl)lumazine + phosphate + 2 H2O + H(+). It functions in the pathway cofactor biosynthesis; riboflavin biosynthesis; riboflavin from 2-hydroxy-3-oxobutyl phosphate and 5-amino-6-(D-ribitylamino)uracil: step 1/2. In terms of biological role, catalyzes the formation of 6,7-dimethyl-8-ribityllumazine by condensation of 5-amino-6-(D-ribitylamino)uracil with 3,4-dihydroxy-2-butanone 4-phosphate. This is the penultimate step in the biosynthesis of riboflavin. The sequence is that of 6,7-dimethyl-8-ribityllumazine synthase from Protochlamydia amoebophila (strain UWE25).